We begin with the raw amino-acid sequence, 116 residues long: Class I hydrophobin 1 (116 aa).

An N-terminal signal peptide occupies residues methionine 1 to alanine 19. 4 disulfides stabilise this stretch: cysteine 35/cysteine 95, cysteine 42/cysteine 89, cysteine 43/cysteine 76, and cysteine 96/cysteine 109. N-linked (GlcNAc...) asparagine glycans are attached at residues asparagine 44 and asparagine 100.

It belongs to the fungal hydrophobin family. In terms of assembly, self-assembles to form functional amyloid fibrils called rodlets. Self-assembly into fibrillar rodlets occurs spontaneously at hydrophobic:hydrophilic interfaces and the rodlets further associate laterally to form amphipathic monolayers.

The protein localises to the secreted. It localises to the cell wall. Its function is as follows. Aerial growth, conidiation, and dispersal of filamentous fungi in the environment rely upon a capability of their secreting small amphipathic proteins called hydrophobins (HPBs) with low sequence identity. Class I can self-assemble into an outermost layer of rodlet bundles on aerial cell surfaces, conferring cellular hydrophobicity that supports fungal growth, development and dispersal; whereas Class II form highly ordered films at water-air interfaces through intermolecular interactions but contribute nothing to the rodlet structure. This chain is Class I hydrophobin 1, found in Pleurotus ostreatus (strain PC15) (Oyster mushroom).